A 66-amino-acid chain; its full sequence is Large ribosomal subunit protein bL35 (66 aa).

The segment at Val-22–Ile-41 is disordered. The span at Arg-27 to Ile-41 shows a compositional bias: basic residues.

It belongs to the bacterial ribosomal protein bL35 family.

This is Large ribosomal subunit protein bL35 from Rhodopseudomonas palustris (strain TIE-1).